The primary structure comprises 256 residues: Glutamate racemase (256 aa).

Residues 11–12 and 43–44 each bind substrate; these read DS and YG. The active-site Proton donor/acceptor is the Cys-74. 75-76 serves as a coordination point for substrate; that stretch reads NT. Cys-182 (proton donor/acceptor) is an active-site residue. 183 to 184 contributes to the substrate binding site; it reads TH.

It belongs to the aspartate/glutamate racemases family.

The catalysed reaction is L-glutamate = D-glutamate. Its pathway is cell wall biogenesis; peptidoglycan biosynthesis. Provides the (R)-glutamate required for cell wall biosynthesis. The chain is Glutamate racemase from Leptospira interrogans serogroup Icterohaemorrhagiae serovar Lai (strain 56601).